The chain runs to 277 residues: MNTQCLHLNYALVEDILLAFIRNEIRKFGFRSAVFGLSGGIDSAVVCELAKRALGPENVLAVLMPYRTSSPESVNDARLMVEKTGVRSEEVEITGVVDAFFDGVSGAGNLRMGNVMARARMLYLYDISARDGRLVIGTSNKTELLLGYGTLFGDMASAVNPIGDLYKTQLWGLARHLQIPEELVSKIPSADLWEGQSDEADLGFGYGEVDLLLYMMLEKRMSRSDIIEAGIEESFYDKVRKMVVRNQYKRMMPVIAKISARTPGIDFRYARDWQEVK.

Residue 36 to 43 (GLSGGIDS) coordinates ATP. Asp42 contributes to the Mg(2+) binding site. Residue Arg118 coordinates deamido-NAD(+). Thr138 serves as a coordination point for ATP. Glu143 lines the Mg(2+) pocket. Lys167 and Ser189 together coordinate ATP.

This sequence belongs to the NAD synthetase family. As to quaternary structure, homodimer.

The catalysed reaction is deamido-NAD(+) + NH4(+) + ATP = AMP + diphosphate + NAD(+) + H(+). The protein operates within cofactor biosynthesis; NAD(+) biosynthesis; NAD(+) from deamido-NAD(+) (ammonia route): step 1/1. Its function is as follows. Catalyzes the ATP-dependent amidation of deamido-NAD to form NAD. Uses ammonia as a nitrogen source. The polypeptide is NH(3)-dependent NAD(+) synthetase (Chlorobium phaeobacteroides (strain BS1)).